A 433-amino-acid chain; its full sequence is Phosphomethylpyrimidine synthase 1 (433 aa).

Substrate contacts are provided by residues asparagine 66, methionine 94, tyrosine 123, histidine 162, 184–186 (SRG), 225–228 (DALR), and glutamate 264. Zn(2+) is bound at residue histidine 268. Tyrosine 291 contacts substrate. Histidine 332 serves as a coordination point for Zn(2+). The [4Fe-4S] cluster site is built by cysteine 408, cysteine 411, and cysteine 415.

It belongs to the ThiC family. [4Fe-4S] cluster is required as a cofactor.

It catalyses the reaction 5-amino-1-(5-phospho-beta-D-ribosyl)imidazole + S-adenosyl-L-methionine = 4-amino-2-methyl-5-(phosphooxymethyl)pyrimidine + CO + 5'-deoxyadenosine + formate + L-methionine + 3 H(+). The protein operates within cofactor biosynthesis; thiamine diphosphate biosynthesis. Functionally, catalyzes the synthesis of the hydroxymethylpyrimidine phosphate (HMP-P) moiety of thiamine from aminoimidazole ribotide (AIR) in a radical S-adenosyl-L-methionine (SAM)-dependent reaction. The sequence is that of Phosphomethylpyrimidine synthase 1 from Saccharolobus solfataricus (strain ATCC 35092 / DSM 1617 / JCM 11322 / P2) (Sulfolobus solfataricus).